The chain runs to 138 residues: Prefoldin subunit alpha (138 aa).

It belongs to the prefoldin subunit alpha family. Heterohexamer of two alpha and four beta subunits.

It is found in the cytoplasm. Functionally, molecular chaperone capable of stabilizing a range of proteins. Seems to fulfill an ATP-independent, HSP70-like function in archaeal de novo protein folding. This chain is Prefoldin subunit alpha, found in Methanosphaera stadtmanae (strain ATCC 43021 / DSM 3091 / JCM 11832 / MCB-3).